The sequence spans 422 residues: 5-hydroxytryptamine receptor 1A (422 aa).

Residues 1 to 38 are Extracellular-facing; that stretch reads MDVFSFGQGNNTTASQEPFGTGGNVTSISDVTFSYQVI. N-linked (GlcNAc...) asparagine glycosylation is found at Asn10, Asn11, and Asn24. Residues 39 to 59 form a helical membrane-spanning segment; it reads TSLLLGTLIFCAVLGNACVVA. The Cytoplasmic segment spans residues 60 to 73; sequence AIALERSLQNVANY. A helical membrane pass occupies residues 74-98; that stretch reads LIGSLAVTDLMVSVLVLPMAALYQV. Residues 99–107 lie on the Extracellular side of the membrane; sequence LNKWTLGQV. A helical membrane pass occupies residues 108-132; that stretch reads TCDLFIALDVLCCTSSILHLCAIAL. Cysteines 109 and 187 form a disulfide. The serotonin site is built by Asp116 and Cys120. The short motif at 133–135 is the DRY motif; important for ligand-induced conformation changes element; it reads DRY. Residues 133–152 are Cytoplasmic-facing; that stretch reads DRYWAITDPIDYVNKRTPRR. A helical membrane pass occupies residues 153 to 174; it reads AAALISLTWLIGFLISIPPMLG. The Extracellular segment spans residues 175–193; the sequence is WRTPEDRSDPDACTISKDH. A helical membrane pass occupies residues 194 to 216; the sequence is GYTIYSTFGAFYIPLLLMLVLYG. Over 217–346 the chain is Cytoplasmic; the sequence is RIFRAARFRI…LARERKTVKT (130 aa). The disordered stretch occupies residues 235-261; that stretch reads KKGAGTSLGTSSAPPPKKSLNGQPGSG. Residues Lys345, Thr346, and Gly352 each contribute to the 1D-myo-inositol 4-phosphate site. Residues 347–370 traverse the membrane as a helical segment; the sequence is LGIIMGTFILCWLPFFIVALVLPF. The Extracellular segment spans residues 371-378; that stretch reads CESSCHMP. Residues 379 to 403 form a helical membrane-spanning segment; it reads ALLGAIINWLGYSNSLLNPVIYAYF. The short motif at 396–400 is the NPxxY motif; important for ligand-induced conformation changes and signaling element; the sequence is NPVIY. Positions 403, 404, and 405 each coordinate 1D-myo-inositol 4-phosphate. Residues 404 to 422 lie on the Cytoplasmic side of the membrane; it reads NKDFQNAFKKIIKCKFCRR.

This sequence belongs to the G-protein coupled receptor 1 family. 5-hydroxytryptamine receptor subfamily. HTR1A sub-subfamily. Heterodimer; heterodimerizes with GPER1. Interacts with YIF1B. Interacts with GPR39 and GALR1. In terms of tissue distribution, detected in hypothalamus, mesencephalon, amygdala, medulla, thalamus, septum and hippocampus.

The protein localises to the cell membrane. Its subcellular location is the cell projection. It is found in the dendrite. Its activity is regulated as follows. G-protein coupled receptor activity is regulated by lipids: phosphatidylinositol 4-phosphate increases HTR1A-mediated activity. Functionally, G-protein coupled receptor for 5-hydroxytryptamine (serotonin). Also functions as a receptor for various drugs and psychoactive substances. Ligand binding causes a conformation change that triggers signaling via guanine nucleotide-binding proteins (G proteins) and modulates the activity of downstream effectors, such as adenylate cyclase. HTR1A is coupled to G(i)/G(o) G alpha proteins and mediates inhibitory neurotransmission: signaling inhibits adenylate cyclase activity and activates a phosphatidylinositol-calcium second messenger system that regulates the release of Ca(2+) ions from intracellular stores. Beta-arrestin family members regulate signaling by mediating both receptor desensitization and resensitization processes. This chain is 5-hydroxytryptamine receptor 1A, found in Rattus norvegicus (Rat).